Reading from the N-terminus, the 465-residue chain is 6-phospho-beta-glucosidase GmuD (465 aa).

Glutamate 170 acts as the Proton donor in catalysis. Glutamate 368 (nucleophile) is an active-site residue.

This sequence belongs to the glycosyl hydrolase 1 family.

It carries out the reaction 6-phospho-beta-D-glucosyl-(1-&gt;4)-D-glucose + H2O = D-glucose 6-phosphate + D-glucose. In terms of biological role, phospho-beta-D-glucosidase that seems to be involved in the degradation of glucomannan. Is also capable of hydrolyzing aryl-phospho-beta-D-glucosides, although very weakly, and plays only a minor role, if any, in the degradation of these substrates in vivo. This Bacillus subtilis (strain 168) protein is 6-phospho-beta-glucosidase GmuD (gmuD).